A 485-amino-acid polypeptide reads, in one-letter code: Glutamyl-tRNA(Gln) amidotransferase subunit A (485 aa).

Active-site charge relay system residues include lysine 74 and serine 149. Serine 173 (acyl-ester intermediate) is an active-site residue.

Belongs to the amidase family. GatA subfamily. In terms of assembly, heterotrimer of A, B and C subunits.

The enzyme catalyses L-glutamyl-tRNA(Gln) + L-glutamine + ATP + H2O = L-glutaminyl-tRNA(Gln) + L-glutamate + ADP + phosphate + H(+). Functionally, allows the formation of correctly charged Gln-tRNA(Gln) through the transamidation of misacylated Glu-tRNA(Gln) in organisms which lack glutaminyl-tRNA synthetase. The reaction takes place in the presence of glutamine and ATP through an activated gamma-phospho-Glu-tRNA(Gln). The protein is Glutamyl-tRNA(Gln) amidotransferase subunit A of Herminiimonas arsenicoxydans.